The following is a 284-amino-acid chain: MIKPLKKAVLPVAGLGTRFLPATKCVPKEMLTVVDRPLIQYAIDEAREAGIEEFCLVSSRGKDSLIDYFDISYELEDTLKARKKTSALKALEATRVIPGTMLSVPPAGTAGPWHAIWCAREFIGNDPFAILLPDDVVQSKKSCIGQLVEVYNKTGGNVLAVTEVPREQTGSYGILDVGKDDGKTVEVKGLVEKPDPKDAPSTLSVIGRYVLTADVLKHLAKLEKGAGGEVQLTDAMAKTIGHVPFHGYRYEGKRFDCGSKIASWKPRSPLRWSVRNWLPACVNS.

The protein belongs to the UDPGP type 2 family.

The enzyme catalyses alpha-D-glucose 1-phosphate + UTP + H(+) = UDP-alpha-D-glucose + diphosphate. The chain is UTP--glucose-1-phosphate uridylyltransferase (celA) from Komagataeibacter xylinus (Gluconacetobacter xylinus).